The sequence spans 286 residues: uncharacterized protein (286 aa).

Positions 2–221 constitute a Radical SAM core domain; that stretch reads VDGMKHLILK…PIYIKNLQKR (220 aa). Cys-16, Cys-20, and Cys-23 together coordinate [4Fe-4S] cluster.

This sequence belongs to the radical SAM superfamily. Anaerobic sulfatase-maturating enzyme family. [4Fe-4S] cluster serves as cofactor.

This is an uncharacterized protein from Methanocaldococcus jannaschii (strain ATCC 43067 / DSM 2661 / JAL-1 / JCM 10045 / NBRC 100440) (Methanococcus jannaschii).